Here is an 893-residue protein sequence, read N- to C-terminus: Flippase kinase 1 (893 aa).

Basic and acidic residues predominate over residues Met1–Leu23. Disordered stretches follow at residues Met1–Leu124, Pro129–Pro148, and Gln163–Gly243. A compositionally biased stretch (polar residues) spans Gln24 to Leu42. Residues Asn49–Asn62 show a composition bias toward low complexity. The segment covering Asn76–Phe87 has biased composition (polar residues). Over residues Ser96–Ser122 the composition is skewed to low complexity. Phosphoserine occurs at positions 140, 144, 171, 175, and 185. Low complexity predominate over residues Ser206 to Ser216. Polar residues predominate over residues Gly228–Pro237. Position 300 is a phosphoserine (Ser300). The segment covering Asp334 to Pro355 has biased composition (polar residues). A disordered region spans residues Asp334 to Lys480. Positions Asn370–Gln380 are enriched in basic and acidic residues. The segment covering Gln381 to Lys399 has biased composition (polar residues). Ser414 bears the Phosphoserine mark. Over residues Ala422–Ser439 the composition is skewed to low complexity. Phosphoserine is present on Ser462. Positions Phe496–Phe777 constitute a Protein kinase domain. ATP contacts are provided by residues Leu502–Val510 and Lys525. Catalysis depends on Asp621, which acts as the Proton acceptor. Residues Lys778–Ser861 form the AGC-kinase C-terminal domain. Positions Ala874–Arg893 are disordered. Positions Ser884–Arg893 are enriched in basic residues.

It belongs to the protein kinase superfamily. Ser/Thr protein kinase family. KIN82 subfamily. Post-translationally, the N-terminal non-catalytic domain is phosphorylated by YPK1.

It localises to the cytoplasm. Its subcellular location is the cell membrane. The enzyme catalyses L-seryl-[protein] + ATP = O-phospho-L-seryl-[protein] + ADP + H(+). The catalysed reaction is L-threonyl-[protein] + ATP = O-phospho-L-threonyl-[protein] + ADP + H(+). With respect to regulation, down-regulated by YKP1 phosphorylation. This effect is counteracted in the presence of mannosyl-inositolphosphorylceramide (MIPC). In terms of biological role, flippase activator that phosphorylates DNF1 and DNF2 and which is involved in the generation of phospholipid asymmetry in membranes by the inward translocation of phospholipids and in the retrieval pathway from early endosomes to the trans-Golgi network (TGN). Also phosphorylates the N-terminal half of YPK1. Involved in pheromone-response. This Saccharomyces cerevisiae (strain ATCC 204508 / S288c) (Baker's yeast) protein is Flippase kinase 1 (FPK1).